Here is a 248-residue protein sequence, read N- to C-terminus: Probable transcriptional regulatory protein RPD_4171 (248 aa).

The disordered stretch occupies residues 1–22 (MAGHSQFKNIMHRKGKQDAQRS).

Belongs to the TACO1 family.

Its subcellular location is the cytoplasm. The sequence is that of Probable transcriptional regulatory protein RPD_4171 from Rhodopseudomonas palustris (strain BisB5).